Here is a 36-residue protein sequence, read N- to C-terminus: Mu-agatoxin-Aa1a (36 aa).

4 cysteine pairs are disulfide-bonded: Cys2–Cys17, Cys9–Cys22, Cys16–Cys32, and Cys24–Cys30. An Asparagine amide modification is found at Asn36.

Belongs to the neurotoxin 07 (Beta/delta-agtx) family. 04 (aga-5) subfamily. In terms of tissue distribution, expressed by the venom gland.

The protein resides in the secreted. In terms of biological role, insecticidal neurotoxin that induces an irreversible spastic paralysis when injected into insects. Modifies presynaptic voltage-gated sodium channels (Nav), causing them to open at the normal resting potential of the nerve. This leads to spontaneous release of neurotransmitter and repetitive action potentials in motor neurons. In Agelenopsis aperta (North American funnel-web spider), this protein is Mu-agatoxin-Aa1a.